Here is a 1034-residue protein sequence, read N- to C-terminus: DNA polymerase I B, chloroplastic/mitochondrial (1034 aa).

The transit peptide at 1–55 (MGVSLRHLSPSSFWVSRRPRVSSSILSFLVPRRRILCTRKVAIIKGNAGYSTATD) directs the protein to the chloroplast and mitochondrion. One can recognise a 3'-5' exonuclease domain in the interval 270 to 468 (ACDTEVSRID…LYESMKKQLQ (199 aa)). Positions 700 to 1030 (HAIAALCEVC…SVDAKCAQNW (331 aa)) are polymerase.

Belongs to the DNA polymerase type-A family. In terms of tissue distribution, expressed in shoot apical meristem.

It localises to the mitochondrion. It is found in the plastid. The protein resides in the chloroplast. The enzyme catalyses DNA(n) + a 2'-deoxyribonucleoside 5'-triphosphate = DNA(n+1) + diphosphate. With respect to regulation, not inhibited by aphidicolin. In addition to polymerase activity, this DNA polymerase exhibits 5'-3' exonuclease activity. Required for DNA replication and accumulation in plastids and mitochondria. This Arabidopsis thaliana (Mouse-ear cress) protein is DNA polymerase I B, chloroplastic/mitochondrial (POLIB).